The chain runs to 254 residues: Alcohol dehydrogenase (254 aa).

10 to 33 contributes to the NAD(+) binding site; sequence FVAGLGGIGLDTSREIVKSGPKNL. Serine 138 contributes to the substrate binding site. Tyrosine 151 (proton acceptor) is an active-site residue.

The protein belongs to the short-chain dehydrogenases/reductases (SDR) family. In terms of assembly, homodimer.

It catalyses the reaction a primary alcohol + NAD(+) = an aldehyde + NADH + H(+). It carries out the reaction a secondary alcohol + NAD(+) = a ketone + NADH + H(+). This Drosophila grimshawi (Hawaiian fruit fly) protein is Alcohol dehydrogenase (Adh).